The primary structure comprises 336 residues: Holliday junction branch migration complex subunit RuvB (336 aa).

A large ATPase domain (RuvB-L) region spans residues 1-182; it reads MKERIVNLET…FGMSFRMQFY (182 aa). Residues L21, R22, G63, K66, T67, S68, 129-131, R172, Y182, and R219 each bind ATP; that span reads EDF. T67 is a Mg(2+) binding site. A small ATPAse domain (RuvB-S) region spans residues 183 to 253; sequence SPSELSLIIK…ITLHALNELG (71 aa). Residues 256 to 336 form a head domain (RuvB-H) region; the sequence is ELGFDEADLA…IPTLNPQTLF (81 aa). The DNA site is built by R310 and R315.

It belongs to the RuvB family. As to quaternary structure, homohexamer. Forms an RuvA(8)-RuvB(12)-Holliday junction (HJ) complex. HJ DNA is sandwiched between 2 RuvA tetramers; dsDNA enters through RuvA and exits via RuvB. An RuvB hexamer assembles on each DNA strand where it exits the tetramer. Each RuvB hexamer is contacted by two RuvA subunits (via domain III) on 2 adjacent RuvB subunits; this complex drives branch migration. In the full resolvosome a probable DNA-RuvA(4)-RuvB(12)-RuvC(2) complex forms which resolves the HJ.

Its subcellular location is the cytoplasm. The catalysed reaction is ATP + H2O = ADP + phosphate + H(+). Functionally, the RuvA-RuvB-RuvC complex processes Holliday junction (HJ) DNA during genetic recombination and DNA repair, while the RuvA-RuvB complex plays an important role in the rescue of blocked DNA replication forks via replication fork reversal (RFR). RuvA specifically binds to HJ cruciform DNA, conferring on it an open structure. The RuvB hexamer acts as an ATP-dependent pump, pulling dsDNA into and through the RuvAB complex. RuvB forms 2 homohexamers on either side of HJ DNA bound by 1 or 2 RuvA tetramers; 4 subunits per hexamer contact DNA at a time. Coordinated motions by a converter formed by DNA-disengaged RuvB subunits stimulates ATP hydrolysis and nucleotide exchange. Immobilization of the converter enables RuvB to convert the ATP-contained energy into a lever motion, pulling 2 nucleotides of DNA out of the RuvA tetramer per ATP hydrolyzed, thus driving DNA branch migration. The RuvB motors rotate together with the DNA substrate, which together with the progressing nucleotide cycle form the mechanistic basis for DNA recombination by continuous HJ branch migration. Branch migration allows RuvC to scan DNA until it finds its consensus sequence, where it cleaves and resolves cruciform DNA. In Helicobacter pylori (strain J99 / ATCC 700824) (Campylobacter pylori J99), this protein is Holliday junction branch migration complex subunit RuvB.